The chain runs to 339 residues: Anthranilate phosphoribosyltransferase (339 aa).

Residues Gly79, 82 to 83, Ser87, 89 to 92, 107 to 115, and Ser119 contribute to the 5-phospho-alpha-D-ribose 1-diphosphate site; these read GD, NIST, and KHGNRSISS. Position 79 (Gly79) interacts with anthranilate. Ser91 serves as a coordination point for Mg(2+). Anthranilate is bound at residue Asn110. Arg165 contacts anthranilate. Mg(2+)-binding residues include Asp224 and Glu225.

The protein belongs to the anthranilate phosphoribosyltransferase family. In terms of assembly, homodimer. Mg(2+) is required as a cofactor.

It carries out the reaction N-(5-phospho-beta-D-ribosyl)anthranilate + diphosphate = 5-phospho-alpha-D-ribose 1-diphosphate + anthranilate. The protein operates within amino-acid biosynthesis; L-tryptophan biosynthesis; L-tryptophan from chorismate: step 2/5. Catalyzes the transfer of the phosphoribosyl group of 5-phosphorylribose-1-pyrophosphate (PRPP) to anthranilate to yield N-(5'-phosphoribosyl)-anthranilate (PRA). The protein is Anthranilate phosphoribosyltransferase of Listeria innocua serovar 6a (strain ATCC BAA-680 / CLIP 11262).